The chain runs to 396 residues: uncharacterized protein (396 aa).

12 consecutive transmembrane segments (helical) span residues 8–28 (TASG…ILAS), 44–64 (ISYV…ISGV), 73–93 (PLVV…PLSP), 97–117 (LAFV…AGTY), 133–153 (VLVK…ITFL), 158–178 (MFYG…IIYL), 213–233 (ALII…IWLP), 250–270 (LLSY…VLLN), 276–296 (VFIT…MLTV), 304–324 (ITAF…ITLM), 338–358 (IVAT…GLIA), and 363–383 (IAHI…AAAF).

Belongs to the major facilitator superfamily.

It is found in the cell membrane. This is an uncharacterized protein from Bacillus subtilis (strain 168).